Reading from the N-terminus, the 382-residue chain is uncharacterized protein (382 aa).

This is an uncharacterized protein from Methanocaldococcus jannaschii (strain ATCC 43067 / DSM 2661 / JAL-1 / JCM 10045 / NBRC 100440) (Methanococcus jannaschii).